We begin with the raw amino-acid sequence, 163 residues long: Nucleotide-binding protein MT0592 (163 aa).

It belongs to the YajQ family.

Nucleotide-binding protein. The protein is Nucleotide-binding protein MT0592 of Mycobacterium tuberculosis (strain CDC 1551 / Oshkosh).